Consider the following 795-residue polypeptide: Phenylalanine--tRNA ligase beta subunit (795 aa).

The 110-residue stretch at 39–148 (AGSFHGVVVG…ADAPIGTDIR (110 aa)) folds into the tRNA-binding domain. The B5 domain maps to 401-476 (PKRATITLRR…RVYGYNNIPD (76 aa)). Mg(2+) contacts are provided by D454, D460, E463, and E464. The FDX-ACB domain occupies 701–794 (SRFPANRRDI…LKERFQASLR (94 aa)).

The protein belongs to the phenylalanyl-tRNA synthetase beta subunit family. Type 1 subfamily. As to quaternary structure, tetramer of two alpha and two beta subunits. Requires Mg(2+) as cofactor.

It is found in the cytoplasm. It carries out the reaction tRNA(Phe) + L-phenylalanine + ATP = L-phenylalanyl-tRNA(Phe) + AMP + diphosphate + H(+). The chain is Phenylalanine--tRNA ligase beta subunit from Escherichia coli O157:H7.